The primary structure comprises 22 residues: Rothein 4.1 (22 aa).

It belongs to the frog skin active peptide (FSAP) family. Rothein subfamily. As to expression, expressed by the skin dorsal glands.

Its subcellular location is the secreted. In terms of biological role, lacks antimicrobial activity. Does not inhibit the formation of NO by neuronal nitric oxide. This Litoria rothii (Roth's tree frog) protein is Rothein 4.1.